We begin with the raw amino-acid sequence, 298 residues long: MKQDLARIEQFLDALWLEKNLAENTLNAYRRDLSMMVEWLHHRGLTLATAQSDDLQALLAERLEGGYKATSSARLLSAVRRLFQYLYREKFREDDPSAHLASPKLPQRLPKDLSEAQVERLLQAPLIDQPLELRDKAMLEVLYATGLRVSELVGLTMSDISLRQGVVRVIGKGNKERLVPLGEEAVYWLETYLEHGRPWLLNGVSIDVLFPSQRAQQMTRQTFWHRIKHYAVLAGIDSEKLSPHVLRHAFATHLLNHGADLRVVQMLLGHSDLSTTQIYTHVATERLRQLHQQHHPRA.

The Core-binding (CB) domain occupies 2–87 (KQDLARIEQF…AVRRLFQYLY (86 aa)). Residues 108–292 (RLPKDLSEAQ…ATERLRQLHQ (185 aa)) enclose the Tyr recombinase domain. Active-site residues include arginine 148, lysine 172, histidine 244, arginine 247, and histidine 270. Tyrosine 279 acts as the O-(3'-phospho-DNA)-tyrosine intermediate in catalysis.

Belongs to the 'phage' integrase family. XerD subfamily. Forms a cyclic heterotetrameric complex composed of two molecules of XerC and two molecules of XerD, in which XerC interacts with XerD via its C-terminal region, XerD interacts with XerC via its C-terminal region and so on.

The protein localises to the cytoplasm. With respect to regulation, ftsK may regulate the catalytic switch between XerC and XerD in the heterotetrameric complex during the two steps of the recombination process. Functionally, site-specific tyrosine recombinase, which acts by catalyzing the cutting and rejoining of the recombining DNA molecules. Binds cooperatively to specific DNA consensus sequences that are separated from XerC binding sites by a short central region, forming the heterotetrameric XerC-XerD complex that recombines DNA substrates. The complex is essential to convert dimers of the bacterial chromosome into monomers to permit their segregation at cell division. It also contributes to the segregational stability of plasmids. In the complex XerD specifically exchanges the bottom DNA strands. The protein is Tyrosine recombinase XerD (xerD) of Escherichia coli O6:H1 (strain CFT073 / ATCC 700928 / UPEC).